A 311-amino-acid polypeptide reads, in one-letter code: Syndecan-1 (311 aa).

Residues 1–22 (MRRAALWLWLCALALRLQPALP) form the signal peptide. Residues 23 to 255 (QIVAVNVPPE…SLLDRKEVLG (233 aa)) are Extracellular-facing. Disordered stretches follow at residues 29-59 (VPPE…LSRQ) and 152-184 (SHPH…VEGG). Acidic residues predominate over residues 32 to 42 (EDQDGSGDDSD). Ser37 carries O-linked (Xyl...) (chondroitin sulfate) serine glycosylation. Asn43 is a glycosylation site (N-linked (GlcNAc...) asparagine). 2 O-linked (Xyl...) (heparan sulfate) serine glycosylation sites follow: Ser45 and Ser47. Ser207 and Ser217 each carry an O-linked (Xyl...) (chondroitin sulfate) serine glycan. The chain crosses the membrane as a helical span at residues 256-276 (GVIAGGLVGLIFAVCLVAFML). Residues 277–311 (YRMKKKDEGSYSLEEPKQANGGAYQKPTKQEEFYA) are Cytoplasmic-facing. Residues 285–311 (GSYSLEEPKQANGGAYQKPTKQEEFYA) form a disordered region. Ser286 is modified (phosphoserine).

The protein belongs to the syndecan proteoglycan family. As to quaternary structure, interacts with CDCP1. Interacts (via C-terminus) with TIAM1 (via PDZ domain). Interacts with MDK. In terms of processing, shedding is enhanced by a number of factors such as heparanase, thrombin or EGF. Also by stress and wound healing. PMA-mediated shedding is inhibited by TIMP3.

The protein resides in the membrane. The protein localises to the secreted. It is found in the extracellular exosome. Cell surface proteoglycan that contains both heparan sulfate and chondroitin sulfate and that links the cytoskeleton to the interstitial matrix. Regulates exosome biogenesis in concert with SDCBP and PDCD6IP. Able to induce its own expression in dental mesenchymal cells and also in the neighboring dental epithelial cells via an MSX1-mediated pathway. This is Syndecan-1 from Mus musculus (Mouse).